Here is an 827-residue protein sequence, read N- to C-terminus: Protein Jade-1 (827 aa).

The interval 1 to 35 (MKRVCLPSSSEDSDDNGSLSTSWSQHSRSLPSFRH) is disordered. Polar residues predominate over residues 16-30 (NGSLSTSWSQHSRSL). The segment at 200 to 250 (DVVCDVCQSPDGEDGNEMVFCDKCNICVHQACYGILKVPEGSWLCRTCALG) adopts a PHD-type 1 zinc-finger fold. Residues 252-286 (QPKCLLCPKKGGAMKPTRSGTKWVHVSCALWIPEV) form a C2HC pre-PHD-type zinc finger. The PHD-type 2 zinc finger occupies 310–366 (LLCSLCNEKVGACIQCSIKNCRTAFHVTCAFDHGLEMKTILTQEDEVKFKSYCPKHG). 2 disordered regions span residues 622 to 705 (TVAK…SSSL) and 769 to 810 (RTKE…SSSS). Composition is skewed to basic and acidic residues over residues 646–661 (SRTQ…EKPL) and 669–682 (KHTE…EKKR). Residues 692 to 705 (ATASSNKKQCSSSL) are compositionally biased toward polar residues.

It belongs to the JADE family. As to quaternary structure, component of the HBO1 complex composed.

It localises to the nucleus. The protein resides in the chromosome. It is found in the cytoplasm. Its subcellular location is the cytoskeleton. The protein localises to the cilium basal body. Scaffold subunit of some HBO1 complexes, which have a histone H4 acetyltransferase activity. Plays a key role in HBO1 complex by directing KAT7/HBO1 specificity towards histone H4 acetylation (H4K5ac, H4K8ac and H4K12ac), regulating DNA replication initiation, regulating DNA replication initiation. The chain is Protein Jade-1 (jade1) from Xenopus laevis (African clawed frog).